A 65-amino-acid chain; its full sequence is Large ribosomal subunit protein bL35 (65 aa).

The protein belongs to the bacterial ribosomal protein bL35 family.

The polypeptide is Large ribosomal subunit protein bL35 (Neisseria meningitidis serogroup A / serotype 4A (strain DSM 15465 / Z2491)).